A 194-amino-acid chain; its full sequence is NADH-quinone oxidoreductase subunit B (194 aa).

[4Fe-4S] cluster contacts are provided by Cys73, Cys74, Cys138, and Cys168.

The protein belongs to the complex I 20 kDa subunit family. In terms of assembly, NDH-1 is composed of 14 different subunits. Subunits NuoB, C, D, E, F, and G constitute the peripheral sector of the complex. Requires [4Fe-4S] cluster as cofactor.

The protein localises to the cell inner membrane. It catalyses the reaction a quinone + NADH + 5 H(+)(in) = a quinol + NAD(+) + 4 H(+)(out). Its function is as follows. NDH-1 shuttles electrons from NADH, via FMN and iron-sulfur (Fe-S) centers, to quinones in the respiratory chain. The immediate electron acceptor for the enzyme in this species is believed to be ubiquinone. Couples the redox reaction to proton translocation (for every two electrons transferred, four hydrogen ions are translocated across the cytoplasmic membrane), and thus conserves the redox energy in a proton gradient. The protein is NADH-quinone oxidoreductase subunit B of Rhizobium leguminosarum bv. trifolii (strain WSM2304).